An 80-amino-acid polypeptide reads, in one-letter code: Mu-conotoxin BuIIIC (80 aa).

The N-terminal stretch at 1–22 (MMSKLGVLLTICLLLFPLFALP) is a signal peptide. A propeptide spanning residues 23–51 (QDGDQPADRPAERMQDDLSSEQHPLFEKR) is cleaved from the precursor. 3 cysteine pairs are disulfide-bonded: C56-C70, C57-C76, and C66-C77. Residue C77 is modified to Cysteine amide.

It belongs to the conotoxin M superfamily. As to expression, expressed by the venom duct.

It is found in the secreted. Mu-conotoxins block voltage-gated sodium channels. Extremely potent inhibitor of Nav1.4/SCN4A (96% inhibition at 1 uM). The inhibition is very slowly reversible. The chain is Mu-conotoxin BuIIIC from Conus bullatus (Bubble cone).